A 2313-amino-acid polypeptide reads, in one-letter code: Cell surface glycoprotein 1 (2313 aa).

A signal peptide spans 1 to 28 (MKRKNKVLSILLTLLLIISTTSVNMSFA). Cohesin domains lie at 34–197 (IEMV…VVEA) and 205–367 (VALE…EIVV). Residues 369 to 378 (GEEPGEEPTE) are compositionally biased toward acidic residues. The interval 369 to 400 (GEEPGEEPTEEPVPTETSVDPTPTVTEEPVPS) is disordered. The segment covering 380–400 (PVPTETSVDPTPTVTEEPVPS) has biased composition (low complexity). One can recognise a Cohesin 3 domain in the interval 407–569 (VIMELDKTKV…SVVQPGEIVV (163 aa)). Residues 571–580 (GEEPGEEPTE) show a composition bias toward acidic residues. Residues 571 to 602 (GEEPGEEPTEEPVPTETSVDPTPTVTEEPVPS) are disordered. Residues 582-602 (PVPTETSVDPTPTVTEEPVPS) are compositionally biased toward low complexity. Positions 609-771 (VIMELDKTKV…SVVQPGEIVA (163 aa)) constitute a Cohesin 4 domain. Over residues 772–782 (EGEEPGEEPTE) the composition is skewed to acidic residues. Residues 772–805 (EGEEPGEEPTEEPVPTETSADPTPTVTEEPVPSE) form a disordered region. The segment covering 784 to 803 (PVPTETSADPTPTVTEEPVP) has biased composition (low complexity). Residues 811 to 973 (VIMELDKTKV…SVVQPGEIVA (163 aa)) form the Cohesin 5 domain. Positions 974–984 (EGEEPGEEPTE) are enriched in acidic residues. The tract at residues 974–1007 (EGEEPGEEPTEEPVPTETPVDPTPTVTEEPVPSE) is disordered. Low complexity predominate over residues 986 to 1007 (PVPTETPVDPTPTVTEEPVPSE). One can recognise a Cohesin 6 domain in the interval 1013-1175 (VIMELDKTKV…SVVQPGEIVA (163 aa)). Disordered stretches follow at residues 1177 to 1203 (GEEPTEEPVPTETPVDPTPTVTEEPVP) and 1374 to 2111 (ASDE…PDGS). Residues 1184–1203 (PVPTETPVDPTPTVTEEPVP) show a composition bias toward low complexity. One can recognise a Cohesin 7 domain in the interval 1211 to 1375 (VIMELDKTKV…IQPAPIKAAS (165 aa)). Residues 1376–1390 (DEPIPTDTPSDEPTP) are compositionally biased toward low complexity. Residues 1383-2025 (TPSDEPTPSD…SDEPTPSETP (643 aa)) form an approximate tandem repeats of T-P-S-D-E-P region. Residues 1391-1411 (SDEPTPSDEPTPSDEPTPSDE) show a composition bias toward pro residues. Residues 1423–1433 (PTDTPSDEPTP) are compositionally biased toward low complexity. The span at 1434-1454 (SDEPTPSDEPTPSDEPTPSDE) shows a compositional bias: pro residues. Positions 1466–1476 (PTDTPSDEPTP) are enriched in low complexity. Positions 1477-1497 (SDEPTPSDEPTPSDEPTPSDE) are enriched in pro residues. The segment covering 1509–1519 (PTDTPSDEPTP) has biased composition (low complexity). The segment covering 1520–1540 (SDEPTPSDEPTPSDEPTPSDE) has biased composition (pro residues). Residues 1552–1562 (PTDTPSDEPTP) are compositionally biased toward low complexity. Over residues 1563–1595 (SDEPTPSDEPTPSDEPTPSDEPTPSDEPTPSDE) the composition is skewed to pro residues. A compositionally biased stretch (low complexity) spans 1607–1617 (PTDTPSDEPTP). Positions 1618–1650 (SDEPTPSDEPTPSDEPTPSDEPTPSDEPTPSDE) are enriched in pro residues. Low complexity predominate over residues 1662-1672 (PTDTPSDEPTP). The segment covering 1673-1693 (SDEPTPSDEPTPSDEPTPSDE) has biased composition (pro residues). Low complexity predominate over residues 1705 to 1715 (PTDTPSDEPTP). The span at 1716–1736 (SDEPTPSDEPTPSDEPTPSDE) shows a compositional bias: pro residues. Low complexity predominate over residues 1748-1758 (PTDTPSDEPTP). The segment covering 1759–1779 (SDEPTPSDEPTPSDEPTPSDE) has biased composition (pro residues). Residues 1791–1801 (PTDTPSDEPTP) show a composition bias toward low complexity. A compositionally biased stretch (pro residues) spans 1802–1822 (SDEPTPSDEPTPSDEPTPSDE). Over residues 1834–1844 (PTDTPSDEPTP) the composition is skewed to low complexity. A compositionally biased stretch (pro residues) spans 1845–1865 (SDEPTPSDEPTPSDEPTPSDE). A compositionally biased stretch (low complexity) spans 1877–1887 (PTDTPSDEPTP). Positions 1888–1908 (SDEPTPSDEPTPSDEPTPSDE) are enriched in pro residues. Over residues 1920–1930 (PTDTPSDEPTP) the composition is skewed to low complexity. Positions 1931–1963 (SDEPTPSDEPTPSDEPTPSDEPTPSDEPTPSDE) are enriched in pro residues. Positions 1975–1985 (PTDTPSDEPTP) are enriched in low complexity. 2 stretches are compositionally biased toward pro residues: residues 1986–2018 (SDEPTPSDEPTPSDEPTPSDEPTPSDEPTPSDE) and 2027–2039 (EPTPTTTPTPTPS). Gly residues predominate over residues 2045 to 2062 (GSGGSGGSGGGGGGGGGT). SLH domains are found at residues 2067–2140 (PTPT…YGAQ), 2141–2204 (SASP…EIMS), and 2211–2274 (ISNP…GAPK). The segment covering 2073–2082 (SKPTSTPAPT) has biased composition (low complexity).

As to quaternary structure, assembled into mono-layered crystalline arrays.

The protein resides in the secreted. The protein localises to the cell wall. Its subcellular location is the S-layer. In Acetivibrio thermocellus (strain ATCC 27405 / DSM 1237 / JCM 9322 / NBRC 103400 / NCIMB 10682 / NRRL B-4536 / VPI 7372) (Clostridium thermocellum), this protein is Cell surface glycoprotein 1 (olpB).